We begin with the raw amino-acid sequence, 350 residues long: MTSATTAPHTTQTLQFHPRVAESVATQRGEGWSIQAVQELLDLPFMELLWRAQATHRTHWPQGDIELATLLSVKTGGCPENCGYCPQSAEFDTGVKAEKLMNVQEVTQAAQAAKDAGATRFCMGAAWRAPKDRDIEKISELITAVKDLGLQTCATLGMLQSHQAQALKDAGLDYYNHNLDTAPEYYSDVVSTRQYQDRLDTLRHVRDAGINVCCGGIVGMGEAPVHRAGLIAQLANLNPYPESVPINSLVRVAGTPLADSEPVDPLDFVRVIAVARITMPKARVRLSAGRQQLGDAVQALCFLAGANSIFYGDKLLVTGNPDVEADTQLLAKLGLKGTPNQTTTETACGA.

The 219-residue stretch at 63 to 281 (GDIELATLLS…IAVARITMPK (219 aa)) folds into the Radical SAM core domain. The [4Fe-4S] cluster site is built by C78, C82, and C85. [2Fe-2S] cluster contacts are provided by C122, C153, C213, and R285.

Belongs to the radical SAM superfamily. Biotin synthase family. Homodimer. The cofactor is [4Fe-4S] cluster. It depends on [2Fe-2S] cluster as a cofactor.

It catalyses the reaction (4R,5S)-dethiobiotin + (sulfur carrier)-SH + 2 reduced [2Fe-2S]-[ferredoxin] + 2 S-adenosyl-L-methionine = (sulfur carrier)-H + biotin + 2 5'-deoxyadenosine + 2 L-methionine + 2 oxidized [2Fe-2S]-[ferredoxin]. Its pathway is cofactor biosynthesis; biotin biosynthesis; biotin from 7,8-diaminononanoate: step 2/2. In terms of biological role, catalyzes the conversion of dethiobiotin (DTB) to biotin by the insertion of a sulfur atom into dethiobiotin via a radical-based mechanism. The protein is Biotin synthase of Acidovorax sp. (strain JS42).